Here is a 166-residue protein sequence, read N- to C-terminus: Small ribosomal subunit protein uS5 (166 aa).

An S5 DRBM domain is found at 12-75; the sequence is YIEKLVQVNR…EAARRNMIQV (64 aa).

It belongs to the universal ribosomal protein uS5 family. As to quaternary structure, part of the 30S ribosomal subunit. Contacts proteins S4 and S8.

With S4 and S12 plays an important role in translational accuracy. Functionally, located at the back of the 30S subunit body where it stabilizes the conformation of the head with respect to the body. This chain is Small ribosomal subunit protein uS5, found in Azotobacter vinelandii (strain DJ / ATCC BAA-1303).